The chain runs to 702 residues: Phosphoglycerol transferase I (702 aa).

The next 3 membrane-spanning stretches (helical) occupy residues 2-22, 71-91, and 103-123; these read HWMLLVSLLLLLWLLVASPRL, FSGYIAVFVGMLLLSLSPLLL, and GGAVFAGFVGMLLVGIAASPL.

The protein belongs to the OpgB family.

The protein resides in the cell inner membrane. The enzyme catalyses a phosphatidylglycerol + a membrane-derived-oligosaccharide D-glucose = a 1,2-diacyl-sn-glycerol + a membrane-derived-oligosaccharide 6-(glycerophospho)-D-glucose.. The protein operates within glycan metabolism; osmoregulated periplasmic glucan (OPG) biosynthesis. In terms of biological role, transfers a phosphoglycerol residue from phosphatidylglycerol to the membrane-bound nascent glucan backbones. The sequence is that of Phosphoglycerol transferase I from Xanthomonas euvesicatoria pv. vesicatoria (strain 85-10) (Xanthomonas campestris pv. vesicatoria).